The sequence spans 66 residues: DNA-directed RNA polymerase subunit omega (66 aa).

The protein belongs to the RNA polymerase subunit omega family. In terms of assembly, the RNAP catalytic core consists of 2 alpha, 1 beta, 1 beta' and 1 omega subunit. When a sigma factor is associated with the core the holoenzyme is formed, which can initiate transcription.

The catalysed reaction is RNA(n) + a ribonucleoside 5'-triphosphate = RNA(n+1) + diphosphate. Promotes RNA polymerase assembly. Latches the N- and C-terminal regions of the beta' subunit thereby facilitating its interaction with the beta and alpha subunits. The chain is DNA-directed RNA polymerase subunit omega from Bacillus licheniformis (strain ATCC 14580 / DSM 13 / JCM 2505 / CCUG 7422 / NBRC 12200 / NCIMB 9375 / NCTC 10341 / NRRL NRS-1264 / Gibson 46).